We begin with the raw amino-acid sequence, 687 residues long: Sphingoid long chain base kinase 5 (687 aa).

The segment at 1–20 (MTLKPSKRRKGRSRHSRKKQ) is disordered. Residues Cys-91 and Cys-94 are each lipidated (S-palmitoyl cysteine; by AKR1). Residues 101–116 (IDRSETSTTDTSKDDL) are compositionally biased toward basic and acidic residues. Disordered regions lie at residues 101 to 130 (IDRS…VNGQ) and 180 to 207 (DELE…SLLT). The span at 193–207 (NSLSRGSNSSSSLLT) shows a compositional bias: low complexity. Residues 266 to 405 (RRNKSIFVII…IDLMCCSQPS (140 aa)) enclose the DAGKc domain. Residues 276–278 (NPF) and Thr-308 contribute to the ATP site. Residue 333-336 (SGDG) participates in substrate binding. Residue Asp-335 is the Proton donor/acceptor of the active site. Residues Glu-340, 366–368 (GSG), Arg-434, and Arg-440 contribute to the ATP site. Acidic residues predominate over residues 506 to 524 (EYETENEDEDEDADADDED). Residues 506–525 (EYETENEDEDEDADADDEDS) are disordered. Residue 652-654 (DGE) participates in ATP binding.

The protein resides in the golgi apparatus membrane. It carries out the reaction (4R)-hydroxysphinganine + ATP = (4R)-hydroxysphinganine 1-phosphate + ADP + H(+). It catalyses the reaction a sphingoid base + ATP = a sphingoid 1-phosphate + ADP + H(+). The catalysed reaction is sphinganine + ATP = sphinganine 1-phosphate + ADP + H(+). In terms of biological role, catalyzes the phosphorylation of the sphingoid long chain bases dihydrosphingosine (DHS or sphinganine) and phytosphingosine (PHS) to form dihydrosphingosine 1-phosphate (DHS-1P) and phytosphingosine 1-phosphate (PHS-1P) respectively. Redundant to LCB4, is only responsible for few percent of the total activity. Involved in the biosynthesis of sphingolipids and ceramides. Involved in heat-induced transient cell cycle arrest. Accumulation of phosphorylated sphingoid long chain bases (LCBPs) stimulates calcium influx and activates calcineurin signaling. Involved in heat-stress resistance. The chain is Sphingoid long chain base kinase 5 (LCB5) from Saccharomyces cerevisiae (strain ATCC 204508 / S288c) (Baker's yeast).